The following is a 138-amino-acid chain: Large ribosomal subunit protein uL16 (138 aa).

This sequence belongs to the universal ribosomal protein uL16 family. Part of the 50S ribosomal subunit.

Binds 23S rRNA and is also seen to make contacts with the A and possibly P site tRNAs. The protein is Large ribosomal subunit protein uL16 of Chlamydia muridarum (strain MoPn / Nigg).